The chain runs to 606 residues: Phosphogluconate dehydratase (606 aa).

The [4Fe-4S] cluster site is built by cysteine 156 and cysteine 223.

Belongs to the IlvD/Edd family. [4Fe-4S] cluster is required as a cofactor.

It carries out the reaction 6-phospho-D-gluconate = 2-dehydro-3-deoxy-6-phospho-D-gluconate + H2O. It participates in carbohydrate metabolism; Entner-Doudoroff pathway. Functionally, catalyzes the dehydration of 6-phospho-D-gluconate to 2-dehydro-3-deoxy-6-phospho-D-gluconate. This chain is Phosphogluconate dehydratase, found in Rhizobium meliloti (strain 1021) (Ensifer meliloti).